The sequence spans 609 residues: Leukotriene A-4 hydrolase (609 aa).

Residues Gln131–Gln133 and Pro263–Glu268 each bind a peptide. His292 contributes to the Zn(2+) binding site. Residue Glu293 is the Proton acceptor of the active site. The Zn(2+) site is built by His296 and Glu315. The active-site Proton donor is the Tyr380. Arg560 to Lys562 contributes to the a peptide binding site.

This sequence belongs to the peptidase M1 family. Homodimer. Zn(2+) serves as cofactor. As to expression, expressed in oocytes.

The protein localises to the cytoplasm. It carries out the reaction Release of the N-terminal residue from a tripeptide.. The catalysed reaction is leukotriene A4 + H2O = leukotriene B4. The protein operates within lipid metabolism; leukotriene B4 biosynthesis. The epoxide hydrolase activity is mildly restrained by suicide inactivation, possibly involving binding of LTA4 to Tyr-380. In terms of biological role, bifunctional zinc metalloenzyme that comprises both epoxide hydrolase (EH) and aminopeptidase activities. Acts as an epoxide hydrolase to catalyze the conversion of leukotriene A4 (LTA4) to the pro-inflammatory mediator leukotriene B4 (LTB4). During the conversion of LTA4 to LTB4, a second product is formed, the isomeric delta6-trans-delta8-cis-LTB4 (5S,12R-dihydroxy-6,10-trans-8,14-cis-eicosatetraenoic acid), with a relative formation of 10% delta6-trans-delta8-cis-LTB4 compared to 90% LTB4. The production of delta6-trans-delta8-cis-LTB4 seems to depend on the phenylalanine residue at position 375. Also has aminopeptidase activity. The chain is Leukotriene A-4 hydrolase from Xenopus laevis (African clawed frog).